The chain runs to 454 residues: Cysteine--tRNA ligase (454 aa).

Cys27 contributes to the Zn(2+) binding site. Positions 29-39 match the 'HIGH' region motif; it reads PTVQDHFHIGH. Zn(2+) is bound by residues Asp207, His232, and Glu236. A 'KMSKS' region motif is present at residues 265-269; the sequence is KMSKS. Lys268 is a binding site for ATP.

The protein belongs to the class-I aminoacyl-tRNA synthetase family. Zn(2+) is required as a cofactor.

The protein localises to the cytoplasm. The catalysed reaction is tRNA(Cys) + L-cysteine + ATP = L-cysteinyl-tRNA(Cys) + AMP + diphosphate. This chain is Cysteine--tRNA ligase, found in Thermoplasma volcanium (strain ATCC 51530 / DSM 4299 / JCM 9571 / NBRC 15438 / GSS1).